Reading from the N-terminus, the 343-residue chain is GTP 3',8-cyclase (343 aa).

Positions 19-244 constitute a Radical SAM core domain; it reads PYGRTISYLR…TDVDDSTGGP (226 aa). Arg28 contacts GTP. Cys35 and Cys39 together coordinate [4Fe-4S] cluster. S-adenosyl-L-methionine is bound at residue Tyr41. Cys42 contributes to the [4Fe-4S] cluster binding site. A GTP-binding site is contributed by Arg77. Gly81 contacts S-adenosyl-L-methionine. Thr111 is a binding site for GTP. Ser135 serves as a coordination point for S-adenosyl-L-methionine. Lys171 contributes to the GTP binding site. Met205 contacts S-adenosyl-L-methionine. Residues Cys268 and Cys271 each contribute to the [4Fe-4S] cluster site. 273 to 275 contributes to the GTP binding site; sequence RVR. Cys285 lines the [4Fe-4S] cluster pocket.

Belongs to the radical SAM superfamily. MoaA family. As to quaternary structure, monomer and homodimer. Requires [4Fe-4S] cluster as cofactor.

The catalysed reaction is GTP + AH2 + S-adenosyl-L-methionine = (8S)-3',8-cyclo-7,8-dihydroguanosine 5'-triphosphate + 5'-deoxyadenosine + L-methionine + A + H(+). Its pathway is cofactor biosynthesis; molybdopterin biosynthesis. In terms of biological role, catalyzes the cyclization of GTP to (8S)-3',8-cyclo-7,8-dihydroguanosine 5'-triphosphate. The protein is GTP 3',8-cyclase of Nitrobacter hamburgensis (strain DSM 10229 / NCIMB 13809 / X14).